A 466-amino-acid chain; its full sequence is UDP-N-acetylmuramate--L-alanine ligase (466 aa).

An ATP-binding site is contributed by 114-120 (GTHGKTT).

This sequence belongs to the MurCDEF family.

The protein resides in the cytoplasm. It carries out the reaction UDP-N-acetyl-alpha-D-muramate + L-alanine + ATP = UDP-N-acetyl-alpha-D-muramoyl-L-alanine + ADP + phosphate + H(+). It functions in the pathway cell wall biogenesis; peptidoglycan biosynthesis. Its function is as follows. Cell wall formation. This Mesorhizobium japonicum (strain LMG 29417 / CECT 9101 / MAFF 303099) (Mesorhizobium loti (strain MAFF 303099)) protein is UDP-N-acetylmuramate--L-alanine ligase.